We begin with the raw amino-acid sequence, 96 residues long: Co-chaperonin GroES (96 aa).

It belongs to the GroES chaperonin family. Heptamer of 7 subunits arranged in a ring. Interacts with the chaperonin GroEL.

The protein resides in the cytoplasm. Its function is as follows. Together with the chaperonin GroEL, plays an essential role in assisting protein folding. The GroEL-GroES system forms a nano-cage that allows encapsulation of the non-native substrate proteins and provides a physical environment optimized to promote and accelerate protein folding. GroES binds to the apical surface of the GroEL ring, thereby capping the opening of the GroEL channel. This is Co-chaperonin GroES from Polaromonas naphthalenivorans (strain CJ2).